Here is a 461-residue protein sequence, read N- to C-terminus: Glycine--tRNA ligase (461 aa).

The substrate site is built by R99 and E173. ATP contacts are provided by residues 205 to 207 (RNE), 215 to 220 (FRTREF), 289 to 290 (EL), and 333 to 336 (GADR). 220–224 (FEQME) is a binding site for substrate. Residue 329 to 333 (EPSLG) participates in substrate binding.

This sequence belongs to the class-II aminoacyl-tRNA synthetase family. As to quaternary structure, homodimer.

The protein localises to the cytoplasm. It carries out the reaction tRNA(Gly) + glycine + ATP = glycyl-tRNA(Gly) + AMP + diphosphate. Functionally, catalyzes the attachment of glycine to tRNA(Gly). This chain is Glycine--tRNA ligase, found in Lysinibacillus sphaericus (strain C3-41).